Here is a 350-residue protein sequence, read N- to C-terminus: MRKLLKPVKDVGIVGYGAYVPKYRIKAEEIGRVWGVSSFPIEEKAVPGLDEDALTIGIEAARNALKRARIDPKLIRAVWFGSESKPYAVKPTGTVIAEAIGATPDVSTADFEFACKAGTEALQTAIGFVGSGMADYAMAIGADTAQGRPGDHLEFTAGAGGAAFIVGEKSSETVAYFEGSYSYVTDTPDFWRRQHEHYPRHGNRFTGEPAYFHHIINAAKTLMEELGLTVNDFDYAVFHQPNVKFPLTVAKILGIPKEKVLPGLLTGIIGNTYSGATMVGVSAVLDIAKPGDRILWVSFGSGAGSDAFSIVVQDAIEEKRDLAPKTMDYVNRKKYIDYALYAKARRKYIM.

Glu-83 acts as the Proton donor/acceptor in catalysis. Cys-115 functions as the Acyl-thioester intermediate in the catalytic mechanism. 2 residues coordinate (3S)-3-hydroxy-3-methylglutaryl-CoA: Cys-115 and Thr-156. Residue Arg-204 coordinates CoA. 2 residues coordinate (3S)-3-hydroxy-3-methylglutaryl-CoA: Thr-206 and His-239. His-239 (proton donor/acceptor) is an active-site residue. Lys-244 contributes to the CoA binding site. Positions 271 and 301 each coordinate (3S)-3-hydroxy-3-methylglutaryl-CoA.

The protein belongs to the thiolase-like superfamily. Archaeal HMG-CoA synthase family. In terms of assembly, interacts with acetoacetyl-CoA thiolase that catalyzes the precedent step in the pathway and with a DUF35 protein. The acetoacetyl-CoA thiolase/HMG-CoA synthase complex channels the intermediate via a fused CoA-binding site, which allows for efficient coupling of the endergonic thiolase reaction with the exergonic HMGCS reaction.

It catalyses the reaction acetoacetyl-CoA + acetyl-CoA + H2O = (3S)-3-hydroxy-3-methylglutaryl-CoA + CoA + H(+). It participates in metabolic intermediate biosynthesis; (R)-mevalonate biosynthesis; (R)-mevalonate from acetyl-CoA: step 2/3. In terms of biological role, catalyzes the condensation of acetyl-CoA with acetoacetyl-CoA to form 3-hydroxy-3-methylglutaryl-CoA (HMG-CoA). Functions in the mevalonate (MVA) pathway leading to isopentenyl diphosphate (IPP), a key precursor for the biosynthesis of isoprenoid compounds that are building blocks of archaeal membrane lipids. The protein is Hydroxymethylglutaryl-CoA synthase of Thermococcus onnurineus (strain NA1).